The chain runs to 507 residues: Maturase K (507 aa).

The protein belongs to the intron maturase 2 family. MatK subfamily.

The protein localises to the plastid. It localises to the chloroplast. Functionally, usually encoded in the trnK tRNA gene intron. Probably assists in splicing its own and other chloroplast group II introns. This chain is Maturase K, found in Annona muricata (Soursop).